Consider the following 357-residue polypeptide: tRNA-specific 2-thiouridylase MnmA (357 aa).

ATP is bound by residues 7–14 (GLSGGVDS) and L33. C94 functions as the Nucleophile in the catalytic mechanism. The cysteines at positions 94 and 193 are disulfide-linked. ATP is bound at residue G119. The interval 143–145 (KDQ) is interaction with tRNA. Catalysis depends on C193, which acts as the Cysteine persulfide intermediate. Residues 298–299 (RY) form an interaction with tRNA region.

It belongs to the MnmA/TRMU family.

Its subcellular location is the cytoplasm. The catalysed reaction is S-sulfanyl-L-cysteinyl-[protein] + uridine(34) in tRNA + AH2 + ATP = 2-thiouridine(34) in tRNA + L-cysteinyl-[protein] + A + AMP + diphosphate + H(+). Catalyzes the 2-thiolation of uridine at the wobble position (U34) of tRNA, leading to the formation of s(2)U34. In Synechococcus sp. (strain ATCC 27144 / PCC 6301 / SAUG 1402/1) (Anacystis nidulans), this protein is tRNA-specific 2-thiouridylase MnmA.